A 366-amino-acid chain; its full sequence is Carbamoyl phosphate synthase small chain (366 aa).

The segment at 1–171 is CPSase; that stretch reads MQSKRYLVLE…KTPYVSTGKD (171 aa). Positions 47, 221, and 223 each coordinate L-glutamine. One can recognise a Glutamine amidotransferase type-1 domain in the interval 173–360; the sequence is SVVLVDFGKK…VAMMTNFKEK (188 aa). Catalysis depends on cysteine 248, which acts as the Nucleophile. 5 residues coordinate L-glutamine: leucine 249, glutamine 252, asparagine 290, glycine 292, and tyrosine 293. Catalysis depends on residues histidine 333 and glutamate 335.

It belongs to the CarA family. In terms of assembly, composed of two chains; the small (or glutamine) chain promotes the hydrolysis of glutamine to ammonia, which is used by the large (or ammonia) chain to synthesize carbamoyl phosphate. Tetramer of heterodimers (alpha,beta)4.

It carries out the reaction hydrogencarbonate + L-glutamine + 2 ATP + H2O = carbamoyl phosphate + L-glutamate + 2 ADP + phosphate + 2 H(+). The enzyme catalyses L-glutamine + H2O = L-glutamate + NH4(+). It functions in the pathway amino-acid biosynthesis; L-arginine biosynthesis; carbamoyl phosphate from bicarbonate: step 1/1. Its pathway is pyrimidine metabolism; UMP biosynthesis via de novo pathway; (S)-dihydroorotate from bicarbonate: step 1/3. Its function is as follows. Small subunit of the glutamine-dependent carbamoyl phosphate synthetase (CPSase). CPSase catalyzes the formation of carbamoyl phosphate from the ammonia moiety of glutamine, carbonate, and phosphate donated by ATP, constituting the first step of 2 biosynthetic pathways, one leading to arginine and/or urea and the other to pyrimidine nucleotides. The small subunit (glutamine amidotransferase) binds and cleaves glutamine to supply the large subunit with the substrate ammonia. This is Carbamoyl phosphate synthase small chain from Staphylococcus aureus (strain COL).